A 156-amino-acid chain; its full sequence is Ribonuclease P protein component (156 aa).

The interval 126 to 156 (GLRKLGVTPGGGRSPAPRAHSGARPRTDARS) is disordered.

It belongs to the RnpA family. Consists of a catalytic RNA component (M1 or rnpB) and a protein subunit.

The catalysed reaction is Endonucleolytic cleavage of RNA, removing 5'-extranucleotides from tRNA precursor.. Its function is as follows. RNaseP catalyzes the removal of the 5'-leader sequence from pre-tRNA to produce the mature 5'-terminus. It can also cleave other RNA substrates such as 4.5S RNA. The protein component plays an auxiliary but essential role in vivo by binding to the 5'-leader sequence and broadening the substrate specificity of the ribozyme. This is Ribonuclease P protein component from Nocardia farcinica (strain IFM 10152).